A 590-amino-acid chain; its full sequence is Myo-inositol transporter 3C (590 aa).

At 1–63 the chain is on the cytoplasmic side; sequence MSRTPSSLDK…GEDKVTPYLC (63 aa). Residues 64-86 form a helical membrane-spanning segment; that stretch reads FLISASAIAGFLFGYDTGVVGVA. At 87 to 105 the chain is on the extracellular side; it reads LPLVGTDLGGSVLSSSQQE. A helical membrane pass occupies residues 106–126; the sequence is IITAGTTIGAIFGSAILGGWG. Over 127–132 the chain is Cytoplasmic; it reads DRLGRK. The chain crosses the membrane as a helical span at residues 133–153; that stretch reads VAILIADVFFTVGAVLIAASY. Topologically, residues 154-162 are extracellular; it reads SVPQMIVGR. A helical membrane pass occupies residues 163–183; it reads IVLGVGVGGAAAIAPLFITET. Over 184–192 the chain is Cytoplasmic; that stretch reads APTAVRGRC. The helical transmembrane segment at 193–213 threads the bilayer; sequence IGVNAFFIPFGQVISEAIGAG. Residues 214–222 are Extracellular-facing; it reads VQDMKNGWR. A helical transmembrane segment spans residues 223-243; sequence LLFALGAVPSLFQLILFHYLP. At 244 to 325 the chain is on the cytoplasmic side; that stretch reads ESPRILILRG…TVSLIQMAGQ (82 aa). A helical membrane pass occupies residues 326 to 346; that stretch reads LSGFNTLLYYAGTLFSLLGLT. Topologically, residues 347 to 349 are extracellular; that stretch reads NPA. Residues 350–370 traverse the membrane as a helical segment; that stretch reads LGGLIPAGTNAFFVLVGMTLV. Residues 371–376 are Cytoplasmic-facing; that stretch reads DKVGRR. A helical transmembrane segment spans residues 377-397; sequence GLLMFGVPIMLAGLVWNIVAF. The Extracellular portion of the chain corresponds to 398-417; it reads HYLCIPTGGLLDTSYKYDTK. Residues 418–438 traverse the membrane as a helical segment; that stretch reads LVGIVIGGIVFFTTGFGLTYS. The Cytoplasmic segment spans residues 439–454; it reads HLAWYQSEFLALEVRS. The chain crosses the membrane as a helical span at residues 455–475; it reads VGSGIATTANWVANLVVSVSY. The Extracellular segment spans residues 476–485; sequence LTELETLTPS. A helical membrane pass occupies residues 486–506; that stretch reads GTYGLYLGFSVVFFIFAVFCY. Residues 507–590 lie on the Cytoplasmic side of the membrane; it reads PETKQLSIDE…NGAKRFPISR (84 aa).

It belongs to the major facilitator superfamily. Sugar transporter (TC 2.A.1.1) family.

It localises to the cell membrane. The catalysed reaction is myo-inositol(out) + H(+)(out) = myo-inositol(in) + H(+)(in). Major transporter for myo-inositol. Plays a role in the traversal of the host blood-brain barrier. The chain is Myo-inositol transporter 3C from Cryptococcus neoformans var. grubii serotype A (strain H99 / ATCC 208821 / CBS 10515 / FGSC 9487) (Filobasidiella neoformans var. grubii).